Reading from the N-terminus, the 1070-residue chain is DNA-directed RNA polymerase subunit beta (1070 aa).

Belongs to the RNA polymerase beta chain family. As to quaternary structure, in plastids the minimal PEP RNA polymerase catalytic core is composed of four subunits: alpha, beta, beta', and beta''. When a (nuclear-encoded) sigma factor is associated with the core the holoenzyme is formed, which can initiate transcription.

The protein localises to the plastid. Its subcellular location is the chloroplast. The enzyme catalyses RNA(n) + a ribonucleoside 5'-triphosphate = RNA(n+1) + diphosphate. Functionally, DNA-dependent RNA polymerase catalyzes the transcription of DNA into RNA using the four ribonucleoside triphosphates as substrates. The chain is DNA-directed RNA polymerase subunit beta from Buxus microphylla (Littleleaf boxwood).